Reading from the N-terminus, the 134-residue chain is ATP synthase epsilon chain, chloroplastic (134 aa).

This sequence belongs to the ATPase epsilon chain family. F-type ATPases have 2 components, CF(1) - the catalytic core - and CF(0) - the membrane proton channel. CF(1) has five subunits: alpha(3), beta(3), gamma(1), delta(1), epsilon(1). CF(0) has three main subunits: a, b and c.

It is found in the plastid. Its subcellular location is the chloroplast thylakoid membrane. Functionally, produces ATP from ADP in the presence of a proton gradient across the membrane. In Pelargonium hortorum (Common geranium), this protein is ATP synthase epsilon chain, chloroplastic.